Reading from the N-terminus, the 1065-residue chain is MIFNASQDSKTEIEYQTISSTQTYLAEEQSERLHNLISKEQLEKLNQAFNERPDSQVGFDDLRGLLLEQDITFNDAVYNRLFLKINQNRDFMVDWNEFVSYLIFGFQEEDPSSQKESLILPISVAPSVRKTEHRSTVCCVALLKAKSDQVPIEEVTETVNFSFGGEDSPEASGMWVTASHEGMLRFWTSHMEPIRTATSESSKPHAVYCMSYAFYNNGKVHSKLVLGDYAGNVRILSYSPNLRGPFQAKPGAALIEVVWADVLKGKIPQMIPKEYINLHNEMISCVHYSLHMNALFATAEYRNTKKYRGRCPGMIMVTYDERSNFRVPLGVSTFFVAESHNIVVTGGPDTFVRIWDVYIPTEPSAILTGHNGGIVMVFVQPEENKVYSVDYQKIIKVWDLQEHTLLQTYGELVRLIHPSETDMTYFYHSHLRELIVAGRKLISIKCCPRVRVDLTDGNTHAAPVSVVLYNRLFRNIVTCGLDSYIIVWDPWSGRRKIIMKNCHTKMIYGEIIDIEITAATFDPLEQFLLTGARDGTLKIWNYNNAVVVRNMSIMPDQEVTSVIWVVDRILAMGWDRQVTEFNDVEGREYGDPKKWSKFHTDDITCADVKLGEGVVTATYSGEVIFWKLETGQPYRRYSVMDPTRFIELKLTPEEEKLMRRSKRLMSRLGSSRMSRATAITMPKADDGRDYGQNVPISVQAVLFLQTRPQTIQHGSVFISLDTGYIQVYSHHSRGGYMSQFLSVHKTGDCVLTMCTDRKNRYIYTGTAFGYIKVWHIVNYCVPEAEKVHVCMPRLRLEFIFMRKEFWVTRAKRVVRHQREPLLVSSYKAHLKAINSIAFINLPKIVFSGSHDYSCRLWTQGGRYLGTLGTVLPWSKLSPFERAGSENQVYRLPPDIKKVASSTTLKVISGVQMDRPAKRAEVKAPEDRDEETAQTDDGYDLKKIFDKPLKEPILGKHFTLPGKSVMDQRIDVDTTQSYIAVYTHLKVHHTEMLERLPTPAVISRVAGENYMDHYVPVEGKVDLSGSALNIKQPPRRNVRPNDPRNMRMAKTRGDMGPGPSPSQQSE.

WD repeat units lie at residues 153–197, 326–365, 369–408, 459–498, 511–550, 598–638, 745–784, and 828–867; these read EEVT…IRTA, RVPL…EPSA, GHNG…LLQT, THAA…RKII, IIDI…VVRN, FHTD…RRYS, KTGD…VPEA, and AHLK…LGTL. Over residues 915–925 the composition is skewed to basic and acidic residues; sequence PAKRAEVKAPE. Disordered regions lie at residues 915–936 and 1024–1065; these read PAKR…QTDD and GSAL…QQSE. The span at 926–936 shows a compositional bias: acidic residues; it reads DRDEETAQTDD.

In Drosophila persimilis (Fruit fly), this protein is WD repeat-containing protein on Y chromosome.